Here is a 35-residue protein sequence, read N- to C-terminus: Pheromone-binding protein 1 (35 aa).

It belongs to the PBP/GOBP family. Homodimer. Antenna.

In terms of biological role, this major soluble protein in olfactory sensilla of male moths might serve to solubilize the extremely hydrophobic pheromone molecules and to transport pheromone through the aqueous lymph to receptors located on olfactory cilia. The polypeptide is Pheromone-binding protein 1 (Lymantria dispar (Gypsy moth)).